We begin with the raw amino-acid sequence, 447 residues long: MREIVHIQAGQCGNQIGAKFWEIISDEHGIDPTGAYHGDSDLQLERINVYYNEASGGKYVPRAILVDLEPGTMDSVRSGPFGQIFRPDNFVFGQSGAGNNWAKGHYTEGAELVDSVLDVVRKEAESCDCLQGFQLTHSLGGGTGSGMGTLLISKIREEYPDRIMNTYSVVPSPKVSDTVVEPYNATLSVHQLVENTDETYCIDNEALYDICFRTLKLSTPTYGDLNHLVSLTMSGVTTCLRFPGQLNADLRKLAVNMVPFPRLHFFMPGFAPLTSRGSQQYRALTVPELTQQMFDAKNMMAACDPRHGRYLTVAAIFRGRMSMKEVDEQMLNIQNKNSSYFVEWIPNNVKTAVCDIPPRGLKMSATFIGNSTAIQELFKRISEQFTAMFRRKAFLHWYTGEGMDEMEFTEAESNMNDLVSEYQQYQEATADEDAEFDEEQEQEIEDN.

Residues Gln-11, Glu-69, Ser-138, Gly-142, Thr-143, Gly-144, Asn-204, and Asn-226 each coordinate GTP. Residue Glu-69 participates in Mg(2+) binding. Residues 428 to 447 (ATADEDAEFDEEQEQEIEDN) form a disordered region. Acidic residues predominate over residues 429 to 447 (TADEDAEFDEEQEQEIEDN).

This sequence belongs to the tubulin family. In terms of assembly, dimer of alpha and beta chains. A typical microtubule is a hollow water-filled tube with an outer diameter of 25 nm and an inner diameter of 15 nM. Alpha-beta heterodimers associate head-to-tail to form protofilaments running lengthwise along the microtubule wall with the beta-tubulin subunit facing the microtubule plus end conferring a structural polarity. Microtubules usually have 13 protofilaments but different protofilament numbers can be found in some organisms and specialized cells. Requires Mg(2+) as cofactor.

The protein resides in the cytoplasm. The protein localises to the cytoskeleton. Its function is as follows. Tubulin is the major constituent of microtubules, a cylinder consisting of laterally associated linear protofilaments composed of alpha- and beta-tubulin heterodimers. Microtubules grow by the addition of GTP-tubulin dimers to the microtubule end, where a stabilizing cap forms. Below the cap, tubulin dimers are in GDP-bound state, owing to GTPase activity of alpha-tubulin. This is Tubulin beta-1 chain from Manduca sexta (Tobacco hawkmoth).